The chain runs to 550 residues: CTP synthase (550 aa).

An amidoligase domain region spans residues 1 to 270 (MTKFVFVTGG…DRLICEELRL (270 aa)). Ser13 contributes to the CTP binding site. Residue Ser13 coordinates UTP. ATP is bound by residues 14 to 19 (SLGKGI) and Asp71. Mg(2+) contacts are provided by Asp71 and Glu144. CTP is bound by residues 151 to 153 (DIE), 191 to 196 (KTKPTQ), and Lys227. UTP contacts are provided by residues 191 to 196 (KTKPTQ) and Lys227. The region spanning 295-547 (TIGMVGKYVD…VEAALASQQR (253 aa)) is the Glutamine amidotransferase type-1 domain. Gly356 lines the L-glutamine pocket. The Nucleophile; for glutamine hydrolysis role is filled by Cys383. Residues 384 to 387 (LGMQ), Glu407, and Arg473 contribute to the L-glutamine site. Residues His520 and Glu522 contribute to the active site.

This sequence belongs to the CTP synthase family. In terms of assembly, homotetramer.

The enzyme catalyses UTP + L-glutamine + ATP + H2O = CTP + L-glutamate + ADP + phosphate + 2 H(+). It carries out the reaction L-glutamine + H2O = L-glutamate + NH4(+). The catalysed reaction is UTP + NH4(+) + ATP = CTP + ADP + phosphate + 2 H(+). Its pathway is pyrimidine metabolism; CTP biosynthesis via de novo pathway; CTP from UDP: step 2/2. Its activity is regulated as follows. Allosterically activated by GTP, when glutamine is the substrate; GTP has no effect on the reaction when ammonia is the substrate. The allosteric effector GTP functions by stabilizing the protein conformation that binds the tetrahedral intermediate(s) formed during glutamine hydrolysis. Inhibited by the product CTP, via allosteric rather than competitive inhibition. Its function is as follows. Catalyzes the ATP-dependent amination of UTP to CTP with either L-glutamine or ammonia as the source of nitrogen. Regulates intracellular CTP levels through interactions with the four ribonucleotide triphosphates. The polypeptide is CTP synthase (Cupriavidus necator (strain ATCC 17699 / DSM 428 / KCTC 22496 / NCIMB 10442 / H16 / Stanier 337) (Ralstonia eutropha)).